A 168-amino-acid chain; its full sequence is Transcription antitermination protein NusB (168 aa).

This sequence belongs to the NusB family.

Functionally, involved in transcription antitermination. Required for transcription of ribosomal RNA (rRNA) genes. Binds specifically to the boxA antiterminator sequence of the ribosomal RNA (rrn) operons. The sequence is that of Transcription antitermination protein NusB from Deinococcus deserti (strain DSM 17065 / CIP 109153 / LMG 22923 / VCD115).